The chain runs to 539 residues: MTKYIFVTGGVVSSLGKGITASSLGRLLKNRGLKVTMQKFDPYINIDPGTMSPYQHGEVYVTEDGTEADLDLGHYERIVDVRTSKYSNVTTGKIYQEVLEKERRGDYNGATVQVIPHITDMIKKKIMRAALTTDSDVIISEIGGTVGDMESTPFMEAIRQMRREVGEENVMYIHCTLVPLLHAAHEMKTKPTQHSVAELRSIGIQPNMLVLRAEQPIDQEHKNKISTFTDVPVDRIIESIDAPSLFDVPLAFQKQGMDQKVCDFLHIDSPKPEADMEAWKKLDDRAKNLKHHTKITLVGKYVELEDAYISVTDALQHAGYLYNTKIDVDKVQAEDITEDNIAKIMEGSDGLIVPGGFGTRGLEGMITAIKYARENDIPFLGICLGMQMASVEFARDILNLEDANTTEAEPHCKNNIIDIMADKRDEENIGGTLRLGLYPAALKKGTKTREAYGDQDVIQERHRHRFEFNNKYREAFEKAGMVFSGVSPDNHLVEIIELPKKKFFIAAQYHPEFLSRPQRPEGLFKSFIGAASGLPEQEF.

Positions 1–267 (MTKYIFVTGG…DQKVCDFLHI (267 aa)) are amidoligase domain. Ser13 is a CTP binding site. Ser13 contributes to the UTP binding site. Position 14-19 (14-19 (SLGKGI)) interacts with ATP. Tyr54 provides a ligand contact to L-glutamine. Asp71 lines the ATP pocket. Residues Asp71 and Glu141 each coordinate Mg(2+). CTP contacts are provided by residues 148 to 150 (DME), 188 to 193 (KTKPTQ), and Lys224. Residues 188–193 (KTKPTQ) and Lys224 contribute to the UTP site. The region spanning 294–537 (KITLVGKYVE…IGAASGLPEQ (244 aa)) is the Glutamine amidotransferase type-1 domain. Gly356 provides a ligand contact to L-glutamine. Cys383 functions as the Nucleophile; for glutamine hydrolysis in the catalytic mechanism. L-glutamine contacts are provided by residues 384-387 (LGMQ), Glu407, and Arg465. Catalysis depends on residues His510 and Glu512.

This sequence belongs to the CTP synthase family. Homotetramer.

It catalyses the reaction UTP + L-glutamine + ATP + H2O = CTP + L-glutamate + ADP + phosphate + 2 H(+). It carries out the reaction L-glutamine + H2O = L-glutamate + NH4(+). The catalysed reaction is UTP + NH4(+) + ATP = CTP + ADP + phosphate + 2 H(+). It functions in the pathway pyrimidine metabolism; CTP biosynthesis via de novo pathway; CTP from UDP: step 2/2. Allosterically activated by GTP, when glutamine is the substrate; GTP has no effect on the reaction when ammonia is the substrate. The allosteric effector GTP functions by stabilizing the protein conformation that binds the tetrahedral intermediate(s) formed during glutamine hydrolysis. Inhibited by the product CTP, via allosteric rather than competitive inhibition. Functionally, catalyzes the ATP-dependent amination of UTP to CTP with either L-glutamine or ammonia as the source of nitrogen. Regulates intracellular CTP levels through interactions with the four ribonucleotide triphosphates. This is CTP synthase from Lactobacillus helveticus (strain DPC 4571).